We begin with the raw amino-acid sequence, 753 residues long: Translation initiation factor IF-2 (753 aa).

The tract at residues Met1–Ala166 is disordered. 3 stretches are compositionally biased toward low complexity: residues Ser19–Ala43, Asn71–Arg81, and Thr102–Arg122. Over residues Pro133–Leu146 the composition is skewed to basic and acidic residues. The span at Thr153–Arg162 shows a compositional bias: low complexity. The tr-type G domain occupies Pro249–Arg418. The interval Gly258–Thr265 is G1. Gly258–Thr265 provides a ligand contact to GTP. A G2 region spans residues Gly283–His287. A G3 region spans residues Asp304 to Gly307. GTP-binding positions include Asp304–His308 and Asn358–Asp361. A G4 region spans residues Asn358 to Asp361. A G5 region spans residues Ser394 to Arg396.

This sequence belongs to the TRAFAC class translation factor GTPase superfamily. Classic translation factor GTPase family. IF-2 subfamily.

Its subcellular location is the cytoplasm. One of the essential components for the initiation of protein synthesis. Protects formylmethionyl-tRNA from spontaneous hydrolysis and promotes its binding to the 30S ribosomal subunits. Also involved in the hydrolysis of GTP during the formation of the 70S ribosomal complex. This Chloroflexus aggregans (strain MD-66 / DSM 9485) protein is Translation initiation factor IF-2.